We begin with the raw amino-acid sequence, 1091 residues long: Protein CTR9 homolog (1091 aa).

Residue alanine 2 is modified to N-acetylalanine. TPR repeat units lie at residues 90–127 (GAYY…DMHE), 128–161 (PSTW…APDN), 163–195 (PALL…FPGC), 197–230 (AAVR…DPDN), 232–267 (EALV…YPYC), 305–338 (SHSF…TNNN), 343–376 (VFPY…YPDN), 377–410 (CETL…DPRD), 412–443 (QAFV…MKKG), 449–482 (IEVL…GIWI), 558–591 (IDAY…DDKN), 593–625 (NALS…TDGK), 640–673 (AAMR…HNSN), 674–707 (MYAA…ASGS), 713–746 (PDVW…FFYN), and 749–782 (SQIL…TPSN). Positions 919 to 1091 (FQRIKEQWKS…EEEEEEEEAN (173 aa)) are disordered. Positions 951-965 (ERRRKKGGKRRKKDK) are enriched in basic residues. Composition is skewed to acidic residues over residues 974 to 993 (DDEE…DEDA), 1003 to 1016 (MTTQ…DDDA), 1026 to 1035 (EDPDVDDDEV), and 1080 to 1091 (NMEEEEEEEEAN).

As to quaternary structure, component of the nuclear PAF1 complex (PAF1C), which consists of VIP2/ELF7/PAF1, VIP3/SKI8/WDR61, VIP4/LEO1, VIP5/RTF1, VIP6/ELF8/CTR9 and CDC73. Interacts with VIP3 and VIP4. Expressed in roots, leaves and shoot apex.

Its subcellular location is the nucleus. Its function is as follows. Component of the PAF1 complex (PAF1C) which is involved in histone modifications such as methylation on histone H3 'Lys-4' (H3K4me3). Involved in regulation of flowering time. Required for the expression of the MADS box genes and flowering repressors FLC, AGL27/FLM and AGL31/MAF2. Required for histone H3 trimethylation on 'Lys-4' H3K4me3 at the FLC and AGL27/FLM loci. Involved in the control of seed dormancy and germination. In Arabidopsis thaliana (Mouse-ear cress), this protein is Protein CTR9 homolog.